The primary structure comprises 234 residues: MYATNLLYLLALWNLWLVSGGQQDIPNGNATLPSPQKPQNTIDQIGANQNYWFTYNALRQNETLAIIDAMESGIASSVLAFQAQMEIQLQPLKIIMLHHAGNIKASNNIKMSRFEKVGSRYFHIEKNLTLTWFEAYVTCREMNGHLANIRDEKELDGILALAPNNSYWVDISKLVEYGGTFVSTLTGREPIFVKWKPNQDKKKQHNCVYIYAKEMYYDECFEKKSFVCQANQWA.

Residues 1 to 21 (MYATNLLYLLALWNLWLVSGG) form the signal peptide. 4 N-linked (GlcNAc...) asparagine glycosylation sites follow: asparagine 29, asparagine 61, asparagine 127, and asparagine 164. One can recognise a C-type lectin domain in the interval 137–234 (VTCREMNGHL…SFVCQANQWA (98 aa)). 2 cysteine pairs are disulfide-bonded: cysteine 139–cysteine 228 and cysteine 207–cysteine 220.

It is found in the secreted. In terms of biological role, responsible for physiological and behavioral changes in mated female flies. In Drosophila simulans (Fruit fly), this protein is Accessory gland protein Acp29AB (Acp29AB).